Reading from the N-terminus, the 124-residue chain is Fluoride-specific ion channel FluC (124 aa).

The next 4 helical transmembrane spans lie at 3-23 (IIAIAVGAAIGANLRYSLSIW), 34-54 (YGTLIVNVIGSFAIGFVLVLA), 66-86 (LLIVTGLLGGFTTFSSLSFET), and 100-120 (LYVLSSFGLGIAGVFLGAGVA). Na(+)-binding residues include Gly-74 and Thr-77.

Belongs to the fluoride channel Fluc/FEX (TC 1.A.43) family.

It localises to the cell membrane. It carries out the reaction fluoride(in) = fluoride(out). With respect to regulation, na(+) is not transported, but it plays an essential structural role and its presence is essential for fluoride channel function. Fluoride-specific ion channel. Important for reducing fluoride concentration in the cell, thus reducing its toxicity. The chain is Fluoride-specific ion channel FluC from Roseiflexus sp. (strain RS-1).